The following is a 601-amino-acid chain: Putative pentatricopeptide repeat-containing protein At3g25060, mitochondrial (601 aa).

The N-terminal 80 residues, 1 to 80 (MVQTKHFCML…KVFDELPQRG (80 aa)), are a transit peptide targeting the mitochondrion. 13 PPR repeats span residues 49–79 (GSSISRDLIASCGRIGEISYARKVFDELPQR), 80–114 (GVSVYNSMIVVYSRGKNPDEVLRLYDQMIAEKIQP), 115–149 (DSSTFTMTIKACLSGLVLEKGEAVWCKAVDFGYKN), 150–180 (DVFVCSSVLNLYMKCGKMDEAEVLFGKMAKR), 181–215 (DVICWTTMVTGFAQAGKSLKAVEFYREMQNEGFGR), 216–250 (DRVVMLGLLQASGDLGDTKMGRSVHGYLYRTGLPM), 251–281 (NVVVETSLVDMYAKVGFIEVASRVFSRMMFK), 282–316 (TAVSWGSLISGFAQNGLANKAFEAVVEMQSLGFQP), 317–347 (DLVTLVGVLVACSQVGSLKTGRLVHCYILKR), 351–381 (DRVTATALMDMYSKCGALSSSREIFEHVGRK), 382–416 (DLVCWNTMISCYGIHGNGQEVVSLFLKMTESNIEP), 417–452 (DHATFASLLSALSHSGLVEQGQHWFSVMINKYKIQP), and 453–487 (SEKHYVCLIDLLARAGRVEEALDMINSEKLDNALP). Residues 488 to 563 (IWVALLSGCI…VPGYSAIEVN (76 aa)) are type E motif. A type E(+) motif region spans residues 564 to 594 (GELRTFLMEDLSHHEHYHMLQVLRNLKTEIR).

The protein belongs to the PPR family. PCMP-E subfamily.

The protein localises to the mitochondrion. In Arabidopsis thaliana (Mouse-ear cress), this protein is Putative pentatricopeptide repeat-containing protein At3g25060, mitochondrial (PCMP-E96).